Consider the following 1575-residue polypeptide: Ovochymase (1575 aa).

An N-terminal signal peptide occupies residues 1–19 (MIVTFVALALSCCTPQVTA). A Peptidase S1 1 domain is found at 36–280 (IVGGEMAKLG…YSSWIANYTQ (245 aa)). Residues Cys61 and Cys77 are joined by a disulfide bond. Active-site charge relay system residues include His76 and Asp132. Disulfide bonds link Cys166/Cys233, Cys199/Cys212, and Cys223/Cys256. The active-site Charge relay system is the Ser227. Asn277 and Asn303 each carry an N-linked (GlcNAc...) asparagine glycan. 4 disulfide bridges follow: Cys300/Cys330, Cys358/Cys386, Cys432/Cys460, and Cys486/Cys507. CUB domains are found at residues 300–423 (CSSN…FHAV) and 432–545 (CGGI…YYFS). N-linked (GlcNAc...) asparagine glycans are attached at residues Asn497, Asn513, and Asn549. The Peptidase S1 2 domain maps to 575–810 (IVNGDIAIAG…YIDWIIATAN (236 aa)). Cys602 and Cys618 are disulfide-bonded. Catalysis depends on charge relay system residues His617 and Asp665. Intrachain disulfides connect Cys700/Cys766, Cys730/Cys745, and Cys756/Cys786. Asn748 carries an N-linked (GlcNAc...) asparagine glycan. The active-site Charge relay system is the Ser760. Asn810 carries an N-linked (GlcNAc...) asparagine glycan. Cystine bridges form between Cys830/Cys859, Cys889/Cys913, Cys956/Cys984, Cys1012/Cys1034, Cys1080/Cys1108, Cys1135/Cys1158, and Cys1221/Cys1246. CUB domains lie at 830-949 (CIQL…YRLE), 956-1070 (CGQL…FVEL), 1080-1197 (CGGV…YTAV), and 1221-1341 (CQDS…YKLM). 4 N-linked (GlcNAc...) asparagine glycosylation sites follow: Asn968, Asn1027, Asn1087, and Asn1090. N-linked (GlcNAc...) asparagine glycosylation is present at Asn1273. The Peptidase S1 3 domain occupies 1314 to 1575 (YNGGEISMLF…FLKWITKIIQ (262 aa)). Disulfide bonds link Cys1376–Cys1392 and Cys1493–Cys1507. Asn1511 is a glycosylation site (N-linked (GlcNAc...) asparagine).

Belongs to the peptidase S1 family. As to expression, expressed in the testis and ovary. Expressed in the gonads and gametes. Expressed in the follicle cells covering the vitelline coat of ovarian egg.

The protein localises to the secreted. In terms of biological role, may be responsible for elevation of the vitelline coat at the late developmental stage of oogenesis and during fertilization in ovarian eggs. The chain is Ovochymase from Halocynthia roretzi (Sea squirt).